Consider the following 330-residue polypeptide: Malate dehydrogenase (330 aa).

Glycine 15–alanine 21 lines the NAD(+) pocket. Residues arginine 96 and arginine 102 each coordinate substrate. NAD(+) is bound by residues asparagine 109, glutamine 116, and valine 133–asparagine 135. Residues asparagine 135 and arginine 166 each contribute to the substrate site. Histidine 191 (proton acceptor) is an active-site residue.

It belongs to the LDH/MDH superfamily. MDH type 2 family.

It carries out the reaction (S)-malate + NAD(+) = oxaloacetate + NADH + H(+). Its function is as follows. Catalyzes the reversible oxidation of malate to oxaloacetate. The protein is Malate dehydrogenase of Chlamydia caviae (strain ATCC VR-813 / DSM 19441 / 03DC25 / GPIC) (Chlamydophila caviae).